A 334-amino-acid chain; its full sequence is Ferredoxin--NADP reductase (334 aa).

FAD contacts are provided by D32, Q40, Y45, V85, F120, D287, and T327.

The protein belongs to the ferredoxin--NADP reductase type 2 family. As to quaternary structure, homodimer. Requires FAD as cofactor.

The catalysed reaction is 2 reduced [2Fe-2S]-[ferredoxin] + NADP(+) + H(+) = 2 oxidized [2Fe-2S]-[ferredoxin] + NADPH. In Wolbachia pipientis subsp. Culex pipiens (strain wPip), this protein is Ferredoxin--NADP reductase.